Here is a 347-residue protein sequence, read N- to C-terminus: Twinfilin-2 (347 aa).

ADF-H domains follow at residues 3–137 (LVLV…RHIT) and 175–311 (GLAF…DEVH). The tract at residues 314 to 347 (QHAHKQAFAKPRGPAGKRGNKRLIKGGGENGGNS) is disordered. The segment covering 338 to 347 (KGGGENGGNS) has biased composition (gly residues).

The protein belongs to the actin-binding proteins ADF family. Twinfilin subfamily. As to quaternary structure, interacts with G-actin; ADP-actin form and capping protein (CP).

The protein localises to the cytoplasm. The protein resides in the cytoskeleton. It localises to the perinuclear region. Functionally, actin-binding protein involved in motile and morphological processes. Inhibits actin polymerization, likely by sequestering G-actin. The protein is Twinfilin-2 (twf2) of Danio rerio (Zebrafish).